A 403-amino-acid chain; its full sequence is Argininosuccinate synthase (403 aa).

Residues 13–21 (AYSGGLDTS) and alanine 40 contribute to the ATP site. L-citrulline is bound by residues tyrosine 92 and serine 97. Glycine 122 is an ATP binding site. 3 residues coordinate L-aspartate: threonine 124, asparagine 128, and aspartate 129. Residue asparagine 128 coordinates L-citrulline. Positions 132, 181, 190, 266, and 278 each coordinate L-citrulline.

The protein belongs to the argininosuccinate synthase family. Type 1 subfamily. Homotetramer.

It localises to the cytoplasm. The enzyme catalyses L-citrulline + L-aspartate + ATP = 2-(N(omega)-L-arginino)succinate + AMP + diphosphate + H(+). It functions in the pathway amino-acid biosynthesis; L-arginine biosynthesis; L-arginine from L-ornithine and carbamoyl phosphate: step 2/3. This Aliivibrio fischeri (strain MJ11) (Vibrio fischeri) protein is Argininosuccinate synthase.